Reading from the N-terminus, the 564-residue chain is Dicarboxylate transporter 2, chloroplastic (564 aa).

Residues 1 to 22 constitute a chloroplast transit peptide; it reads MESLALLPTLSLSTTTTTSKAT. The interval 35 to 58 is disordered; that stretch reads RRPHLSLSLSSTPKPTLTFSSHSH. Residues 39–58 are compositionally biased toward low complexity; sequence LSLSLSSTPKPTLTFSSHSH. The next 12 helical transmembrane spans lie at 94 to 114, 127 to 147, 166 to 186, 235 to 255, 262 to 282, 307 to 327, 356 to 376, 380 to 400, 415 to 435, 451 to 471, 484 to 504, and 538 to 558; these read GAKL…RFAV, LLAI…PVGA, TAFC…FFFA, AGGI…SLPG, LGTY…ALFL, VFWL…TPLI, VTKN…LWVF, IGVS…LLGV, TLAW…LGIV, LSWP…HYLF, AFLA…LALA, and MGFI…GVWW.

The protein belongs to the SLC13A/DASS transporter (TC 2.A.47) family. DIT1 subfamily. As to expression, expressed in leaves.

The protein localises to the plastid. Its subcellular location is the chloroplast inner membrane. In terms of biological role, glutamate/malate translocator involved with DIT1 in primary ammonia assimilation and in the re-assimilation of ammonia generated by the photorespiratory pathway. Exports the end product of ammonia assimilation, glutamate, from plastids to the cytosol. The precursor for ammonia assimilation, 2-oxoglutarate, is imported from the cytosol by DIT1. This Spinacia oleracea (Spinach) protein is Dicarboxylate transporter 2, chloroplastic (DIT2).